We begin with the raw amino-acid sequence, 359 residues long: Protein disulfide-isomerase C17H9.14c (359 aa).

Residues 1-19 form the signal peptide; the sequence is MRLPLLSFVIFALFALVFA. 2 Thioredoxin domains span residues 20–130 and 134–250; these read SGVV…EKTG and RKIV…KKSG. Catalysis depends on nucleophile residues cysteine 51 and cysteine 54. Intrachain disulfides connect cysteine 51-cysteine 54 and cysteine 170-cysteine 173.

This sequence belongs to the protein disulfide isomerase family.

The enzyme catalyses Catalyzes the rearrangement of -S-S- bonds in proteins.. Functionally, participates in the folding of proteins containing disulfide bonds, may be involved in glycosylation, prolyl hydroxylation and triglyceride transfer. The protein is Protein disulfide-isomerase C17H9.14c of Schizosaccharomyces pombe (strain 972 / ATCC 24843) (Fission yeast).